Consider the following 250-residue polypeptide: Indole-3-glycerol phosphate synthase (250 aa).

It belongs to the TrpC family.

It carries out the reaction 1-(2-carboxyphenylamino)-1-deoxy-D-ribulose 5-phosphate + H(+) = (1S,2R)-1-C-(indol-3-yl)glycerol 3-phosphate + CO2 + H2O. It functions in the pathway amino-acid biosynthesis; L-tryptophan biosynthesis; L-tryptophan from chorismate: step 4/5. The protein is Indole-3-glycerol phosphate synthase of Bacillus velezensis (strain DSM 23117 / BGSC 10A6 / LMG 26770 / FZB42) (Bacillus amyloliquefaciens subsp. plantarum).